The chain runs to 339 residues: DNA-directed RNA polymerase subunit alpha (339 aa).

The tract at residues 1–235 is alpha N-terminal domain (alpha-NTD); it reads MTIQKNWQEL…DQLNVFVNFE (235 aa). Positions 251–339 are alpha C-terminal domain (alpha-CTD); it reads FNPAFLKKVD…ELAKRFEDHY (89 aa).

This sequence belongs to the RNA polymerase alpha chain family. As to quaternary structure, homodimer. The RNAP catalytic core consists of 2 alpha, 1 beta, 1 beta' and 1 omega subunit. When a sigma factor is associated with the core the holoenzyme is formed, which can initiate transcription.

The enzyme catalyses RNA(n) + a ribonucleoside 5'-triphosphate = RNA(n+1) + diphosphate. In terms of biological role, DNA-dependent RNA polymerase catalyzes the transcription of DNA into RNA using the four ribonucleoside triphosphates as substrates. This chain is DNA-directed RNA polymerase subunit alpha, found in Rhodopseudomonas palustris (strain HaA2).